A 375-amino-acid chain; its full sequence is Alcohol dehydrogenase 1 (375 aa).

Serine 2 carries the N-acetylserine modification. 7 residues coordinate Zn(2+): cysteine 47, histidine 68, cysteine 98, cysteine 101, cysteine 104, cysteine 112, and cysteine 175. NAD(+) contacts are provided by residues 200 to 205, aspartate 224, and lysine 229; that span reads GLGGVG. N6-succinyllysine is present on lysine 234. 293–295 is an NAD(+) binding site; that stretch reads VGV. Lysine 340 carries the N6-succinyllysine modification. Arginine 370 is an NAD(+) binding site.

The protein belongs to the zinc-containing alcohol dehydrogenase family. Class-I subfamily. Dimer of identical or non-identical chains of three types (A, B, C), which are coded by 3 separate genes at different loci. The cofactor is Zn(2+). In terms of tissue distribution, expressed at high levels in the liver, small intestine and eye, at moderate levels in kidney, ovary and uterus, and at low levels in the spinal cord, thymus, heart, stomach mucosa, skin and testis.

It is found in the cytoplasm. It catalyses the reaction a primary alcohol + NAD(+) = an aldehyde + NADH + H(+). It carries out the reaction a secondary alcohol + NAD(+) = a ketone + NADH + H(+). The sequence is that of Alcohol dehydrogenase 1 (Adh1) from Mus musculus (Mouse).